Reading from the N-terminus, the 171-residue chain is Large ribosomal subunit protein bL9 (171 aa).

It belongs to the bacterial ribosomal protein bL9 family.

In terms of biological role, binds to the 23S rRNA. The chain is Large ribosomal subunit protein bL9 from Rickettsia prowazekii (strain Madrid E).